The primary structure comprises 382 residues: uncharacterized protein (382 aa).

Helical transmembrane passes span 14-34, 45-65, 79-99, 102-122, 131-151, 157-177, 204-224, 235-255, 270-290, 291-311, 325-345, and 348-368; these read GLLL…LWLA, VVSS…GYVI, FIFA…SWLA, FVAG…LMCS, LLAA…LLVS, LMSV…PLLF, LGVN…GLMP, ASIG…QWPI, VQVF…AMAP, ALFI…AWAC, ALLL…AMLM, and FSDN…LLML.

The protein belongs to the major facilitator superfamily. YcaD (TC 2.A.1.26) family.

It is found in the cell inner membrane. This is an uncharacterized protein from Escherichia coli O6:K15:H31 (strain 536 / UPEC).